A 428-amino-acid polypeptide reads, in one-letter code: Maltoporin 1 (428 aa).

Residues 1–25 (MTMKVKLLTTSVALALSMTAFSSNA) form the signal peptide.

This sequence belongs to the porin LamB (TC 1.B.3) family. In terms of assembly, homotrimer formed of three 18-stranded antiparallel beta-barrels, containing three independent channels.

The protein localises to the cell outer membrane. It catalyses the reaction beta-maltose(in) = beta-maltose(out). Functionally, involved in the transport of maltose and maltodextrins. This is Maltoporin 1 from Aeromonas salmonicida (strain A449).